We begin with the raw amino-acid sequence, 304 residues long: Ribosomal RNA large subunit methyltransferase F (304 aa).

The protein belongs to the methyltransferase superfamily. METTL16/RlmF family.

The protein localises to the cytoplasm. The catalysed reaction is adenosine(1618) in 23S rRNA + S-adenosyl-L-methionine = N(6)-methyladenosine(1618) in 23S rRNA + S-adenosyl-L-homocysteine + H(+). Functionally, specifically methylates the adenine in position 1618 of 23S rRNA. This Klebsiella pneumoniae subsp. pneumoniae (strain ATCC 700721 / MGH 78578) protein is Ribosomal RNA large subunit methyltransferase F.